The sequence spans 69 residues: Rubredoxin-1 (69 aa).

The 56-residue stretch at 14–69 (QASWMCAECGYIYDPAEGNLETNIRPGMPFDKLPDDWSCPVCNHPKNQFTKFISQL) folds into the Rubredoxin-like domain. The Fe cation site is built by C19, C22, C52, and C55.

Belongs to the rubredoxin family. Monomer. The cofactor is Fe(3+).

Its function is as follows. Serves as an electron acceptor for pyruvate ferredoxin oxidoreductase (PFOR). The protein is Rubredoxin-1 (rub1) of Chlorobaculum tepidum (strain ATCC 49652 / DSM 12025 / NBRC 103806 / TLS) (Chlorobium tepidum).